Here is an 82-residue protein sequence, read N- to C-terminus: DNA-directed RNA polymerase subunit Rpo5 (82 aa).

This sequence belongs to the archaeal Rpo5/eukaryotic RPB5 RNA polymerase subunit family. As to quaternary structure, part of the RNA polymerase complex.

It is found in the cytoplasm. It carries out the reaction RNA(n) + a ribonucleoside 5'-triphosphate = RNA(n+1) + diphosphate. Its function is as follows. DNA-dependent RNA polymerase (RNAP) catalyzes the transcription of DNA into RNA using the four ribonucleoside triphosphates as substrates. In Pyrococcus horikoshii (strain ATCC 700860 / DSM 12428 / JCM 9974 / NBRC 100139 / OT-3), this protein is DNA-directed RNA polymerase subunit Rpo5.